A 329-amino-acid polypeptide reads, in one-letter code: MQGSVTEFLKPRLVDIEQVSSTHAKVTLEPLERGFGHTLGNALRRILLSSMPGCAVTEVEIDGVLHEYSTKEGVQEDILEILLNLKGLAVRVQGKDEVILTLNKSGIGPVTAADIIHDGDVEIVKPQHLICHLTDENASISMRIKVQRGRGYVPASARIHTEEDERPIGRLLVDACYSPVERIAYNVEAARVEQRTDLDKLVIEMETNGTIDPEEAIRRAATILAEQLEAFVDLRDVRQPEVKEEKPEFDPILLRPVDDLELTVRSANCLKAEAIHYIGDLVQRTEVELLKTPNLGKKSLTEIKDVLASRGLSLGMRLENWPPASIADE.

The interval 1 to 235 (MQGSVTEFLK…EQLEAFVDLR (235 aa)) is alpha N-terminal domain (alpha-NTD). An alpha C-terminal domain (alpha-CTD) region spans residues 249-329 (FDPILLRPVD…NWPPASIADE (81 aa)).

The protein belongs to the RNA polymerase alpha chain family. As to quaternary structure, homodimer. The RNAP catalytic core consists of 2 alpha, 1 beta, 1 beta' and 1 omega subunit. When a sigma factor is associated with the core the holoenzyme is formed, which can initiate transcription.

It carries out the reaction RNA(n) + a ribonucleoside 5'-triphosphate = RNA(n+1) + diphosphate. Functionally, DNA-dependent RNA polymerase catalyzes the transcription of DNA into RNA using the four ribonucleoside triphosphates as substrates. This Pectobacterium atrosepticum (strain SCRI 1043 / ATCC BAA-672) (Erwinia carotovora subsp. atroseptica) protein is DNA-directed RNA polymerase subunit alpha.